A 131-amino-acid chain; its full sequence is D-ribose pyranase (131 aa).

Residue His-20 is the Proton donor of the active site. Substrate contacts are provided by residues Asp-28, His-98, and 120-122; that span reads YAN.

The protein belongs to the RbsD / FucU family. RbsD subfamily. As to quaternary structure, homodecamer.

The protein localises to the cytoplasm. It carries out the reaction beta-D-ribopyranose = beta-D-ribofuranose. It participates in carbohydrate metabolism; D-ribose degradation; D-ribose 5-phosphate from beta-D-ribopyranose: step 1/2. Functionally, catalyzes the interconversion of beta-pyran and beta-furan forms of D-ribose. The polypeptide is D-ribose pyranase (Bacillus cytotoxicus (strain DSM 22905 / CIP 110041 / 391-98 / NVH 391-98)).